We begin with the raw amino-acid sequence, 252 residues long: Hsp70-Hsp90 organising protein (252 aa).

TPR repeat units follow at residues 7–40 (AQRLKELGNKCFQEGKYEEAVKYFSDAITNDPLD), 41–74 (HVLYSNLSGAFASLGRFYEALESANKCISIKKDW), and 75–108 (PKGYIRKGCAEHGLRQLSNAEKTYLEGLKIDPNN). The stretch at 197-239 (EGNDAEERQRQQREEEERRKKKEEEERKKKEEEEMKKQNRTPE) forms a coiled coil. The interval 199 to 252 (NDAEERQRQQREEEERRKKKEEEERKKKEEEEMKKQNRTPEQIQGDEHKLKVMN) is disordered. Composition is skewed to basic and acidic residues over residues 201–233 (AEERQRQQREEEERRKKKEEEERKKKEEEEMKK) and 243–252 (GDEHKLKVMN).

As to quaternary structure, monomer. Homodimer. Forms a complex composed of HOP and chaperones HSP70 and HSP90; the interaction is stronger in the absence of ATP. Interacts (via TPR 1, 2, 3, 7, 8 and 9 repeats) with HSP70 (via C-terminus); the interaction is direct and is stronger in the absence of ATP. Interacts (via TPR 4, 5 and 6 repeats) with HSP90 (via C-terminus); the interaction is direct.

Its subcellular location is the cytoplasm. In terms of biological role, acts as a co-chaperone and mediates the association of the chaperones HSP70 and HSP90 probably facilitating substrate transfer from HSP70 to HSP90. Stimulates HSP70 ATPase activity and, in contrast, inhibits HSP90 ATPase activity. The protein is Hsp70-Hsp90 organising protein of Plasmodium falciparum.